The sequence spans 209 residues: Casparian strip membrane protein 1 (209 aa).

Residues 1–46 (MSSGANATTIDVPETRAEAKGKAPLIAAPIVATTKATPHPNAGWKK) are Cytoplasmic-facing. The helical transmembrane segment at 47–67 (GLAIFDFLLRLAAIAATLAAA) threads the bilayer. Residues 68-95 (TTMGTTDETLPFFTQFFQFQASFDDLPA) are Extracellular-facing. The helical transmembrane segment at 96-116 (FMFFVVATAIASGYLALSLPF) threads the bilayer. Residues 117–137 (SLVSIFRPHAQGIRLLLIISD) lie on the Cytoplasmic side of the membrane. A helical membrane pass occupies residues 138-158 (TVMLALTTAGAASATAIVYLA). Residues 159 to 183 (HNGDSSANWIAICQQFTDFCQSVSG) lie on the Extracellular side of the membrane. The helical transmembrane segment at 184 to 204 (AVVASFIAVVIFMLLVMMSAL) threads the bilayer. Residues 205-209 (ALRKH) are Cytoplasmic-facing.

The protein belongs to the Casparian strip membrane proteins (CASP) family. In terms of assembly, homodimer and heterodimers.

Its subcellular location is the cell membrane. Its function is as follows. Regulates membrane-cell wall junctions and localized cell wall deposition. Required for establishment of the Casparian strip membrane domain (CSD) and the subsequent formation of Casparian strips, a cell wall modification of the root endodermis that determines an apoplastic barrier between the intraorganismal apoplasm and the extraorganismal apoplasm and prevents lateral diffusion. This chain is Casparian strip membrane protein 1, found in Vitis vinifera (Grape).